We begin with the raw amino-acid sequence, 353 residues long: Photosystem II D2 protein (353 aa).

The residue at position 2 (Thr2) is an N-acetylthreonine. Thr2 carries the phosphothreonine modification. Residues 41–61 form a helical membrane-spanning segment; that stretch reads CAYFALGGWFTGTTFVTSWYT. Residue His118 participates in chlorophyll a binding. Residues 125-141 traverse the membrane as a helical segment; that stretch reads GFMLRQFELARSVQLRP. Pheophytin a contacts are provided by Gln130 and Asn143. A helical membrane pass occupies residues 153 to 166; the sequence is VFVSVFLIYPLGQS. A chlorophyll a-binding site is contributed by His198. The helical transmembrane segment at 208–228 threads the bilayer; sequence AALLCAIHGATVENTLFEDGD. His215 and Phe262 together coordinate a plastoquinone. Position 215 (His215) interacts with Fe cation. His269 provides a ligand contact to Fe cation. The helical transmembrane segment at 279 to 295 threads the bilayer; it reads GLWMSAIGVVGLALNLR.

This sequence belongs to the reaction center PufL/M/PsbA/D family. In terms of assembly, PSII is composed of 1 copy each of membrane proteins PsbA, PsbB, PsbC, PsbD, PsbE, PsbF, PsbH, PsbI, PsbJ, PsbK, PsbL, PsbM, PsbT, PsbX, PsbY, PsbZ, Psb30/Ycf12, at least 3 peripheral proteins of the oxygen-evolving complex and a large number of cofactors. It forms dimeric complexes. The cofactor is The D1/D2 heterodimer binds P680, chlorophylls that are the primary electron donor of PSII, and subsequent electron acceptors. It shares a non-heme iron and each subunit binds pheophytin, quinone, additional chlorophylls, carotenoids and lipids. There is also a Cl(-1) ion associated with D1 and D2, which is required for oxygen evolution. The PSII complex binds additional chlorophylls, carotenoids and specific lipids.. Phosphorylated on threonine residue(s); phosphorylation increases with increasing light levels.

It localises to the plastid. The protein localises to the chloroplast thylakoid membrane. The catalysed reaction is 2 a plastoquinone + 4 hnu + 2 H2O = 2 a plastoquinol + O2. Photosystem II (PSII) is a light-driven water:plastoquinone oxidoreductase that uses light energy to abstract electrons from H(2)O, generating O(2) and a proton gradient subsequently used for ATP formation. It consists of a core antenna complex that captures photons, and an electron transfer chain that converts photonic excitation into a charge separation. The D1/D2 (PsbA/PsbD) reaction center heterodimer binds P680, the primary electron donor of PSII as well as several subsequent electron acceptors. D2 is needed for assembly of a stable PSII complex. This chain is Photosystem II D2 protein, found in Marchantia polymorpha (Common liverwort).